We begin with the raw amino-acid sequence, 213 residues long: MSNRKALLGKKLGMSQVWDENGFFVPVTLVDVSTNVVTAVKTEESDGYKAVQLGYGAIDPTKVTKPLAGHFAKAGVTPRRHLVEVRTDDVDQFEAGQELAADLFEEGAEVDVTGTTKGKGFAGTIKRWGFKSYRRTHGSHKNERRPGSVGACATPSRILKGKRMAGRMGHVTATTQNLTVVSADVENGILAIKGAIPGPKGGIVLVRSAVKGA.

The protein belongs to the universal ribosomal protein uL3 family. In terms of assembly, part of the 50S ribosomal subunit. Forms a cluster with proteins L14 and L19.

In terms of biological role, one of the primary rRNA binding proteins, it binds directly near the 3'-end of the 23S rRNA, where it nucleates assembly of the 50S subunit. The chain is Large ribosomal subunit protein uL3 from Bifidobacterium longum (strain DJO10A).